Consider the following 340-residue polypeptide: DnaJ homolog subfamily B member 1 (340 aa).

The region spanning 2 to 70 (GKDYYQTLGL…REIFDRYGEE (69 aa)) is the J domain. Thr307 bears the Phosphothreonine mark.

As to quaternary structure, interacts with DNAJC3. Interacts with HSF1 (via transactivation domain); this interaction results in the inhibition of heat shock- and HSF1-induced transcriptional activity during the attenuation and recovery phase period of the heat shock response. Interacts with BAG3.

The protein resides in the cytoplasm. It localises to the nucleus. The protein localises to the nucleolus. Its function is as follows. Interacts with HSP70 and can stimulate its ATPase activity. Stimulates the association between HSC70 and HIP. Negatively regulates heat shock-induced HSF1 transcriptional activity during the attenuation and recovery phase period of the heat shock response. Stimulates ATP hydrolysis and the folding of unfolded proteins mediated by HSPA1A/B (in vitro). In Homo sapiens (Human), this protein is DnaJ homolog subfamily B member 1 (DNAJB1).